A 623-amino-acid chain; its full sequence is MLGEDEGNTVLEKGNNPSVKQGEVGAVFIVPKILIREHERVILKQILQILDQDELVQPPLDKFPYKKLELPKYIDELKTRDATNTSYKMIQLDAYGEKKVGSNGELFGGRHYLFNTFTFTAHMGVLLVLLQDVIKVLYQSNATHDEDEFIVQHDQILVMETSEEQTKFLAKNGVIPEESKGSFKYITARSAFVEFGASVIAGGQRIVDDYWESLAKKQNLSSHQRVFKLSTNLISKISLLRPSFQNNRISNANEISANTNNTCTISTSKFESQYPIVTEQPSAEIREAYIENFAKGEHISAIVPGQSISGTLELSAQFRVPRYHSKNSFQQALQMKAMDIPIGRHEELLAQYESQAPDGSASISLPNHIPSVNPSNKPIKRMLSSILDINVSSSKNKKSEENEMIKPMNKGQHKNNTSLNINGWKFESLPLKSAENSGKQQYYRGLPLYEKNTLLERLKQLTPNEIKELEHLHDAVFVNTGLQNVRKVRTKKWKKYWQYKAGIPIGLKRSQLDEFKNKYLKDVLAQTSVTTNFNEITNTDETITTKRVPNPNFLGNCNIKDFKPPYIYSHVNKVPQNVAGDKTAVKLDTEVKNTNANPVVATDPVAAKPDNLANFSNEVAMNN.

This sequence belongs to the RSC7/SWP82 family. SWP82 subfamily. Interacts with SWI3 and SNF12. Component of the SWI/SNF global transcription activator complex. The 1.14 MDa SWI/SNF complex is composed of 11 different subunits: one copy each of SWI1, SNF2/SWI2, SNF5, SNF12/SWP73, ARP7/SWP61, ARP9/SWP59; two copies each of SWI3, SNF6, SNF11, SWP82; and three copies of TAF14/SWP29.

It is found in the nucleus. Its function is as follows. Involved in transcriptional activation. Component of the SWI/SNF complex, an ATP-dependent chromatin remodeling complex, which is required for the positive and negative regulation of gene expression of a large number of genes. It changes chromatin structure by altering DNA-histone contacts within a nucleosome, leading eventually to a change in nucleosome position, thus facilitating or repressing binding of gene-specific transcription factors. This Saccharomyces cerevisiae (strain ATCC 204508 / S288c) (Baker's yeast) protein is SWI/SNF global transcription activator complex subunit SWP82 (SWP82).